Reading from the N-terminus, the 90-residue chain is Small ribosomal subunit protein bS16 (90 aa).

This sequence belongs to the bacterial ribosomal protein bS16 family.

The polypeptide is Small ribosomal subunit protein bS16 (Streptococcus equi subsp. zooepidemicus (strain H70)).